We begin with the raw amino-acid sequence, 135 residues long: Holo-[acyl-carrier-protein] synthase (135 aa).

Asp-8 and Glu-57 together coordinate Mg(2+).

Belongs to the P-Pant transferase superfamily. AcpS family. Mg(2+) serves as cofactor.

The protein localises to the cytoplasm. The catalysed reaction is apo-[ACP] + CoA = holo-[ACP] + adenosine 3',5'-bisphosphate + H(+). In terms of biological role, transfers the 4'-phosphopantetheine moiety from coenzyme A to a Ser of acyl-carrier-protein. This Xanthobacter autotrophicus (strain ATCC BAA-1158 / Py2) protein is Holo-[acyl-carrier-protein] synthase.